Here is a 361-residue protein sequence, read N- to C-terminus: 4-oxalomesaconate tautomerase (361 aa).

It belongs to the PrpF family.

The enzyme catalyses (1E)-4-oxobut-1-ene-1,2,4-tricarboxylate = 4-carboxy-2-hydroxy-cis,cis-muconate. Its function is as follows. Catalyzes the tautomerization of the 4-oxalomesaconic acid keto (OMAketo) generated by GalA dioxygenase to 4-oxalomesaconic acid enol (OMAenol). Mediates the second step in gallate degradation pathway. This chain is 4-oxalomesaconate tautomerase (galD), found in Pseudomonas putida (strain ATCC 47054 / DSM 6125 / CFBP 8728 / NCIMB 11950 / KT2440).